The chain runs to 173 residues: Peptide deformylase (173 aa).

Residues Cys98 and His140 each coordinate Fe cation. Glu141 is an active-site residue. His144 contacts Fe cation.

The protein belongs to the polypeptide deformylase family. Requires Fe(2+) as cofactor.

It catalyses the reaction N-terminal N-formyl-L-methionyl-[peptide] + H2O = N-terminal L-methionyl-[peptide] + formate. Functionally, removes the formyl group from the N-terminal Met of newly synthesized proteins. Requires at least a dipeptide for an efficient rate of reaction. N-terminal L-methionine is a prerequisite for activity but the enzyme has broad specificity at other positions. In Caulobacter sp. (strain K31), this protein is Peptide deformylase.